A 66-amino-acid polypeptide reads, in one-letter code: Cocaine- and amphetamine-regulated transcript protein (66 aa).

2 disulfide bridges follow: C34–C52 and C40–C60.

It belongs to the CART family.

The protein resides in the secreted. Functionally, satiety factor closely associated with the actions of leptin and neuropeptide y; this anorectic peptide inhibits both normal and starvation-induced feeding and completely blocks the feeding response induced by neuropeptide Y and regulated by leptin in the hypothalamus. This is Cocaine- and amphetamine-regulated transcript protein (CARTPT) from Sus scrofa (Pig).